The following is a 467-amino-acid chain: MVLDSGTQVYEQAPPRPPAGSPSQHHKLKPSNGNGPPLYPWPESLGMPLALAVPSALQQQTMWQTFSKLHLEQSSHMRRSESTYSVNSTGRRGRGKAPIGRGCDPGGTLRPAASLPHIAKIRKDVGSSSSKSPCMLVALRPTNMDQEREKFFQSHYTYNPQFEYQEPMPMSVLEKYQEASAQFMNQAVGIIEAVLEKFGTYENFEAATGGQLLTKCQIWSTVRKYMQKEGCVGEIVVQLSEDLLSQAVMMVENSRPTLAINLTGARQYWLEGMLRHEIGTHYLRGVNNSRQPWHSTEGRLQYGLQPANPTEEGLASLHSVLFRKQPFLWRAALLYYTIHQAAHMSFRQLFQDLAQYVQDEGVRWEYCVRAKRGQTDTSQPGCFSKDQVYLDGILRILRHRHTIDFQLLTSLGKVSYEDVEQLRPYGVLDNTRVPHFMKDLERYRQQLEHIMTTNRLDEAELGRLLPD.

The segment covering 1–10 (MVLDSGTQVY) has biased composition (polar residues). Disordered stretches follow at residues 1 to 40 (MVLD…PLYP) and 77 to 111 (MRRS…TLRP). His-276 contacts Zn(2+). Glu-277 serves as the catalytic Nucleophile. Zn(2+)-binding residues include His-281 and Glu-312.

Belongs to the peptidase MATCAP family. Requires Zn(2+) as cofactor.

The protein resides in the cytoplasm. The protein localises to the cytoskeleton. It catalyses the reaction C-terminal L-alpha-aminoacyl-L-glutamyl-L-glutamyl-L-tyrosyl-[tubulin] + H2O = C-terminal L-alpha-aminoacyl-L-glutamyl-L-glutamyl-[tubulin] + L-tyrosine. The catalysed reaction is C-terminal L-alpha-aminoacyl-L-glutamyl-L-glutamyl-L-phenylalanyl-[tubulin] + H2O = C-terminal L-alpha-aminoacyl-L-glutamyl-L-glutamyl-[tubulin] + L-phenylalanine. Its function is as follows. Tyrosine carboxypeptidase that removes the C-terminal tyrosine residue of alpha-tubulin, thereby regulating microtubule dynamics and function. Also able to remove the C-terminal phenylalanine residue of alpha-tubulin TUBA8. Recognizes adjacent tubulin dimers along the same protofilament. This Mus musculus (Mouse) protein is Microtubule-associated tyrosine carboxypeptidase 1.